The chain runs to 199 residues: NADH-quinone oxidoreductase subunit C (199 aa).

The protein belongs to the complex I 30 kDa subunit family. In terms of assembly, NDH-1 is composed of 14 different subunits. Subunits NuoB, C, D, E, F, and G constitute the peripheral sector of the complex.

The protein resides in the cell inner membrane. The enzyme catalyses a quinone + NADH + 5 H(+)(in) = a quinol + NAD(+) + 4 H(+)(out). Its function is as follows. NDH-1 shuttles electrons from NADH, via FMN and iron-sulfur (Fe-S) centers, to quinones in the respiratory chain. The immediate electron acceptor for the enzyme in this species is believed to be ubiquinone. Couples the redox reaction to proton translocation (for every two electrons transferred, four hydrogen ions are translocated across the cytoplasmic membrane), and thus conserves the redox energy in a proton gradient. The sequence is that of NADH-quinone oxidoreductase subunit C from Leptothrix cholodnii (strain ATCC 51168 / LMG 8142 / SP-6) (Leptothrix discophora (strain SP-6)).